Consider the following 434-residue polypeptide: RNA polymerase II holoenzyme cyclin-like subunit (434 aa).

Residues glutamate 23–leucine 155 form the Cyclin N-terminal domain. The segment covering glycine 248–threonine 278 has biased composition (low complexity). Disordered regions lie at residues glycine 248–glutamate 292, leucine 301–asparagine 320, and glutamine 330–serine 362. Residues glutamine 330–glycine 359 are compositionally biased toward low complexity.

The protein belongs to the cyclin family. Cyclin C subfamily. As to quaternary structure, component of the SRB8-11 complex, a regulatory module of the Mediator complex.

The protein localises to the nucleus. In terms of biological role, component of the SRB8-11 complex. The SRB8-11 complex is a regulatory module of the Mediator complex which is itself involved in regulation of basal and activated RNA polymerase II-dependent transcription. The SRB8-11 complex may be involved in the transcriptional repression of a subset of genes regulated by Mediator. It may inhibit the association of the Mediator complex with RNA polymerase II to form the holoenzyme complex. The SRB8-11 complex phosphorylates the C-terminal domain (CTD) of the largest subunit of RNA polymerase II. The protein is RNA polymerase II holoenzyme cyclin-like subunit (SSN8) of Candida albicans (strain SC5314 / ATCC MYA-2876) (Yeast).